A 209-amino-acid chain; its full sequence is Probable calcium-binding protein CML36 (209 aa).

Residues 22 to 59 are disordered; that stretch reads SKSPTAFSFGSASSSSGQDCKNSGGDGGGGSVTPTSIL. Low complexity predominate over residues 27–38; the sequence is AFSFGSASSSSG. 4 consecutive EF-hand domains span residues 66-101, 103-138, 139-174, and 176-209; these read YSYV…LGPD, LTEE…LDPA, RDST…IGDE, and CTLD…DLQR. Ca(2+) is bound by residues Asp79, Asp81, Asp83, and Asp90. Residues Asp152, Asp154, Asp156, Glu163, Asp189, Asp191, Asp193, and Glu200 each contribute to the Ca(2+) site.

Its function is as follows. Potential calcium sensor. This Arabidopsis thaliana (Mouse-ear cress) protein is Probable calcium-binding protein CML36 (CML36).